A 459-amino-acid chain; its full sequence is tRNA modification GTPase MnmE (459 aa).

Residues Arg-29, Glu-86, and Lys-125 each coordinate (6S)-5-formyl-5,6,7,8-tetrahydrofolate. One can recognise a TrmE-type G domain in the interval 221–382 (GMNVVIAGRP…LTEHLKAVMG (162 aa)). Asn-231 lines the K(+) pocket. Residues 231–236 (NAGKSS), 250–256 (TNIEGTT), and 275–278 (DTAG) contribute to the GTP site. A Mg(2+)-binding site is contributed by Ser-235. The K(+) site is built by Thr-250, Ile-252, and Thr-255. Thr-256 contacts Mg(2+). Lys-459 serves as a coordination point for (6S)-5-formyl-5,6,7,8-tetrahydrofolate.

It belongs to the TRAFAC class TrmE-Era-EngA-EngB-Septin-like GTPase superfamily. TrmE GTPase family. In terms of assembly, homodimer. Heterotetramer of two MnmE and two MnmG subunits. K(+) serves as cofactor.

It is found in the cytoplasm. Exhibits a very high intrinsic GTPase hydrolysis rate. Involved in the addition of a carboxymethylaminomethyl (cmnm) group at the wobble position (U34) of certain tRNAs, forming tRNA-cmnm(5)s(2)U34. This Marinomonas sp. (strain MWYL1) protein is tRNA modification GTPase MnmE.